Reading from the N-terminus, the 393-residue chain is Chalcone synthase DII (393 aa).

Cysteine 164 is a catalytic residue.

It belongs to the thiolase-like superfamily. Chalcone/stilbene synthases family.

The catalysed reaction is (E)-4-coumaroyl-CoA + 3 malonyl-CoA + 3 H(+) = 2',4,4',6'-tetrahydroxychalcone + 3 CO2 + 4 CoA. It participates in secondary metabolite biosynthesis; flavonoid biosynthesis. The primary product of this enzyme is 4,2',4',6'-tetrahydroxychalcone (also termed naringenin-chalcone or chalcone) which can under specific conditions spontaneously isomerize into naringenin. This Ipomoea batatas (Sweet potato) protein is Chalcone synthase DII (CHS-DII).